The primary structure comprises 343 residues: Uroporphyrinogen decarboxylase (343 aa).

Substrate contacts are provided by residues 23 to 27 (RQAGR), Asp73, Tyr149, Thr204, and His320.

Belongs to the uroporphyrinogen decarboxylase family. As to quaternary structure, homodimer.

It localises to the cytoplasm. It carries out the reaction uroporphyrinogen III + 4 H(+) = coproporphyrinogen III + 4 CO2. It functions in the pathway porphyrin-containing compound metabolism; protoporphyrin-IX biosynthesis; coproporphyrinogen-III from 5-aminolevulinate: step 4/4. In terms of biological role, catalyzes the decarboxylation of four acetate groups of uroporphyrinogen-III to yield coproporphyrinogen-III. This chain is Uroporphyrinogen decarboxylase, found in Bradyrhizobium sp. (strain BTAi1 / ATCC BAA-1182).